The chain runs to 241 residues: Fatty acid metabolism regulator protein (241 aa).

The region spanning 6-74 (KGPASFAEKY…HGKPTRVNNF (69 aa)) is the HTH gntR-type domain. Positions 34 to 53 (ERELSELIGVTRTTLREVLQ) form a DNA-binding region, H-T-H motif.

As to quaternary structure, homodimer.

The protein resides in the cytoplasm. Its function is as follows. Multifunctional regulator of fatty acid metabolism. This chain is Fatty acid metabolism regulator protein, found in Shewanella sp. (strain MR-4).